The primary structure comprises 612 residues: Sulfite reductase [NADPH] flavoprotein alpha-component (612 aa).

One can recognise a Flavodoxin-like domain in the interval 64 to 202 (VTLISASQTG…QAQQWRQQVV (139 aa)). Residues 70–75 (SQTGNA), 117–120 (STQG), and 153–162 (LGDTSYEHFC) each bind FMN. The 215-residue stretch at 247 to 461 (TAPLTAQLSV…IEHNDNFRLP (215 aa)) folds into the FAD-binding FR-type domain. Residues Thr335, Lys369, 399–402 (RLYS), 417–419 (TVG), Tyr423, and 432–435 (GGAS) each bind FAD. Residues 532–533 (SR), 538–542 (KIYVQ), and Asp574 contribute to the NADP(+) site. Position 612 (Tyr612) interacts with FAD.

This sequence belongs to the NADPH-dependent sulphite reductase flavoprotein subunit CysJ family. In the N-terminal section; belongs to the flavodoxin family. The protein in the C-terminal section; belongs to the flavoprotein pyridine nucleotide cytochrome reductase family. As to quaternary structure, alpha(8)-beta(8). The alpha component is a flavoprotein, the beta component is a hemoprotein. It depends on FAD as a cofactor. FMN is required as a cofactor.

The catalysed reaction is hydrogen sulfide + 3 NADP(+) + 3 H2O = sulfite + 3 NADPH + 4 H(+). Its pathway is sulfur metabolism; hydrogen sulfide biosynthesis; hydrogen sulfide from sulfite (NADPH route): step 1/1. Its function is as follows. Component of the sulfite reductase complex that catalyzes the 6-electron reduction of sulfite to sulfide. This is one of several activities required for the biosynthesis of L-cysteine from sulfate. The flavoprotein component catalyzes the electron flow from NADPH -&gt; FAD -&gt; FMN to the hemoprotein component. In Yersinia pseudotuberculosis serotype O:1b (strain IP 31758), this protein is Sulfite reductase [NADPH] flavoprotein alpha-component.